The chain runs to 341 residues: Protein-glutamate methylesterase/protein-glutamine glutaminase 1 (341 aa).

The region spanning 2–119 (KVGIVNDSAL…SDAKLTAGPL (118 aa)) is the Response regulatory domain. Aspartate 53 carries the 4-aspartylphosphate modification. A CheB-type methylesterase domain is found at 146–331 (TLAASRLVAI…LTAIAPRLVQ (186 aa)). Active-site residues include serine 158, histidine 185, and aspartate 278.

The protein belongs to the CheB family. In terms of processing, phosphorylated by CheA. Phosphorylation of the N-terminal regulatory domain activates the methylesterase activity.

The protein localises to the cytoplasm. It catalyses the reaction [protein]-L-glutamate 5-O-methyl ester + H2O = L-glutamyl-[protein] + methanol + H(+). The catalysed reaction is L-glutaminyl-[protein] + H2O = L-glutamyl-[protein] + NH4(+). In terms of biological role, involved in chemotaxis. Part of a chemotaxis signal transduction system that modulates chemotaxis in response to various stimuli. Catalyzes the demethylation of specific methylglutamate residues introduced into the chemoreceptors (methyl-accepting chemotaxis proteins or MCP) by CheR. Also mediates the irreversible deamidation of specific glutamine residues to glutamic acid. The sequence is that of Protein-glutamate methylesterase/protein-glutamine glutaminase 1 from Cupriavidus pinatubonensis (strain JMP 134 / LMG 1197) (Cupriavidus necator (strain JMP 134)).